Here is a 185-residue protein sequence, read N- to C-terminus: Ribosome-recycling factor (185 aa).

The disordered stretch occupies residues 127-158; the sequence is AVRNTRQDANNKVKKLEKDKEISEDESKKAQE.

Belongs to the RRF family.

Its subcellular location is the cytoplasm. Responsible for the release of ribosomes from messenger RNA at the termination of protein biosynthesis. May increase the efficiency of translation by recycling ribosomes from one round of translation to another. This is Ribosome-recycling factor from Helicobacter pylori (strain G27).